Reading from the N-terminus, the 195-residue chain is Imidazoleglycerol-phosphate dehydratase (195 aa).

The protein belongs to the imidazoleglycerol-phosphate dehydratase family.

The protein resides in the cytoplasm. The catalysed reaction is D-erythro-1-(imidazol-4-yl)glycerol 3-phosphate = 3-(imidazol-4-yl)-2-oxopropyl phosphate + H2O. It functions in the pathway amino-acid biosynthesis; L-histidine biosynthesis; L-histidine from 5-phospho-alpha-D-ribose 1-diphosphate: step 6/9. The protein is Imidazoleglycerol-phosphate dehydratase of Bacillus cytotoxicus (strain DSM 22905 / CIP 110041 / 391-98 / NVH 391-98).